A 580-amino-acid chain; its full sequence is Sensor histidine kinase YvrG (580 aa).

At 1–6 (MRLRWK) the chain is on the cytoplasmic side. A helical transmembrane segment spans residues 7 to 27 (FLFHFFGQMLIVILLLTVMLV). Over 28 to 261 (ASFFYLDARF…KSFLKVVLKA (234 aa)) the chain is Extracellular. Residues 262–282 (MFLVMAVLFMYIIWMTVWYMF) traverse the membrane as a helical segment. Topologically, residues 283–580 (RFGLPIFHTI…TVITILFKKQ (298 aa)) are cytoplasmic. Residues 363 to 580 (GLSHDLKTPL…TVITILFKKQ (218 aa)) enclose the Histidine kinase domain. His366 is subject to Phosphohistidine; by autocatalysis.

It localises to the cell membrane. It carries out the reaction ATP + protein L-histidine = ADP + protein N-phospho-L-histidine.. In terms of biological role, member of the two-component regulatory system YvrG/YvrH that positively regulates 7 transcriptional units (wprA, wapA-yxxG, dltABCDE, sunA, sunT-bdbA-yolJ-bdbB, sigO-rsoA, and sigX-rsiX), and negatively regulates the lytABC operon. Probably activates YvrH by phosphorylation. This chain is Sensor histidine kinase YvrG (yvrG), found in Bacillus subtilis (strain 168).